The chain runs to 760 residues: Acetyl-CoA decarbonylase/synthase complex subunit alpha 1 (760 aa).

Residues C56, C59, C60, C62, C67, and C77 each contribute to the [4Fe-4S] cluster site. H100 is a CO binding site. [Ni-4Fe-4S] cluster-binding residues include H231, C259, and C298. 4Fe-4S ferredoxin-type domains are found at residues 381-410 and 418-450; these read KKLQ…VEAM and FEGL…MIED. Residues C390, C393, C396, C400, C428, C431, C434, and C438 each contribute to the [4Fe-4S] cluster site. Positions 496, 525, and 560 each coordinate [Ni-4Fe-4S] cluster.

Belongs to the Ni-containing carbon monoxide dehydrogenase family. As to quaternary structure, heterotetramer of two alpha and two epsilon subunits. The ACDS complex is made up of alpha, epsilon, beta, gamma and delta subunits with a probable stoichiometry of (alpha(2)epsilon(2))(4)-beta(8)-(gamma(1)delta(1))(8). The cofactor is [4Fe-4S] cluster. It depends on [Ni-4Fe-4S] cluster as a cofactor.

The enzyme catalyses CO + 2 oxidized [2Fe-2S]-[ferredoxin] + H2O = 2 reduced [2Fe-2S]-[ferredoxin] + CO2 + 2 H(+). Part of the ACDS complex that catalyzes the reversible cleavage of acetyl-CoA, allowing autotrophic growth from CO(2). The alpha-epsilon subcomponent functions as a carbon monoxide dehydrogenase. In Methanopyrus kandleri (strain AV19 / DSM 6324 / JCM 9639 / NBRC 100938), this protein is Acetyl-CoA decarbonylase/synthase complex subunit alpha 1.